A 107-amino-acid polypeptide reads, in one-letter code: U1-lycotoxin-Ls1b (107 aa).

The N-terminal stretch at 1–20 (MMKVLVVVALLVTHISYSSS) is a signal peptide. Residues 21-41 (EGIDDLEADELLSLMANEQTR) constitute a propeptide that is removed on maturation. Intrachain disulfides connect Cys-44/Cys-59, Cys-51/Cys-68, Cys-58/Cys-86, and Cys-70/Cys-84.

This sequence belongs to the neurotoxin 19 (CSTX) family. 04 (U1-Lctx) subfamily. Expressed by the venom gland.

The protein localises to the secreted. This Lycosa singoriensis (Wolf spider) protein is U1-lycotoxin-Ls1b.